A 433-amino-acid chain; its full sequence is Probable carboxypeptidase ATEG_02905 (433 aa).

A signal peptide spans 1–18 (MKSAISLLLASAATYVGA). The tract at residues 20–40 (PHPEPPQLVLSPSTSTGVHGD) is disordered. Asn-92 carries an N-linked (GlcNAc...) asparagine glycan. Residue Asp-161 coordinates Zn(2+). Glu-193 acts as the Proton acceptor in catalysis. Position 194 (Glu-194) interacts with Zn(2+).

Belongs to the peptidase M20A family. It depends on Zn(2+) as a cofactor.

The protein resides in the secreted. In Aspergillus terreus (strain NIH 2624 / FGSC A1156), this protein is Probable carboxypeptidase ATEG_02905.